Here is a 253-residue protein sequence, read N- to C-terminus: DNA repair protein RecO (253 aa).

It belongs to the RecO family.

Its function is as follows. Involved in DNA repair and RecF pathway recombination. This Symbiobacterium thermophilum (strain DSM 24528 / JCM 14929 / IAM 14863 / T) protein is DNA repair protein RecO.